The sequence spans 241 residues: tRNA pseudouridine synthase A (241 aa).

Asp52 acts as the Nucleophile in catalysis. Tyr111 contributes to the substrate binding site.

It belongs to the tRNA pseudouridine synthase TruA family. Homodimer.

The catalysed reaction is uridine(38/39/40) in tRNA = pseudouridine(38/39/40) in tRNA. Its function is as follows. Formation of pseudouridine at positions 38, 39 and 40 in the anticodon stem and loop of transfer RNAs. The polypeptide is tRNA pseudouridine synthase A (Ureaplasma parvum serovar 3 (strain ATCC 27815 / 27 / NCTC 11736)).